The following is a 413-amino-acid chain: 3-hydroxy-3-methylglutaryl-coenzyme A reductase (413 aa).

Catalysis depends on charge relay system residues E106 and D312. Catalysis depends on H408, which acts as the Proton donor.

The protein belongs to the HMG-CoA reductase family.

It carries out the reaction (R)-mevalonate + 2 NADP(+) + CoA = (3S)-3-hydroxy-3-methylglutaryl-CoA + 2 NADPH + 2 H(+). It functions in the pathway metabolic intermediate biosynthesis; (R)-mevalonate biosynthesis; (R)-mevalonate from acetyl-CoA: step 3/3. Its function is as follows. Converts HMG-CoA to mevalonate. The polypeptide is 3-hydroxy-3-methylglutaryl-coenzyme A reductase (hmgA) (Pyrococcus horikoshii (strain ATCC 700860 / DSM 12428 / JCM 9974 / NBRC 100139 / OT-3)).